We begin with the raw amino-acid sequence, 472 residues long: MSPEEWTYLVVLLISIPIGFLFKKAGPGLKRWGAAAVGLGLTLFTCGPHTLHSLVTILGTWALIQAQPCSCHALALAWTFSYLLFFRALSLLGLPTPTPFTNAVQLLLTLKLVSLASEVQDLHLAQRKEMASGFSKGPTLGLLPDVPSLMETLSYSYCYVGIMTGPFFRYRTYLDWLEQPFPGAVPSLRPLLRRAWPAPLFGLLFLLSSHLFPLEAVREDAFYARPLPARLFYMIPVFFAFRMRFYVAWIAAECGCIAAGFGAYPVAAKARAGGGPTLQCPPPSSPEKAASLEYDYETIRNIDCYSTDFCVRVRDGMRYWNMTVQWWLAQYIYKSAPARSYVLRSAWTMLLSAYWHGLHPGYYLSFLTIPLCLAAEGRLESALRGRLSPGGQKAWDWVHWFLKMRAYDYMCMGFVLLSLADTLRYWASIYFCIHFLALAALGLGLALGGGSPSRRKAASQPTSLAPEKLREE.

At 1-5 (MSPEE) the chain is on the cytoplasmic side. The helical transmembrane segment at 6-22 (WTYLVVLLISIPIGFLF) threads the bilayer. Topologically, residues 23–33 (KKAGPGLKRWG) are lumenal. Residues 34 to 57 (AAAVGLGLTLFTCGPHTLHSLVTI) form a helical membrane-spanning segment. The Cytoplasmic segment spans residues 58 to 73 (LGTWALIQAQPCSCHA). Residues 74–93 (LALAWTFSYLLFFRALSLLG) form a helical membrane-spanning segment. Over 94-194 (LPTPTPFTNA…VPSLRPLLRR (101 aa)) the chain is Lumenal. Residues 195–212 (AWPAPLFGLLFLLSSHLF) form a helical membrane-spanning segment. Residues 213-231 (PLEAVREDAFYARPLPARL) lie on the Cytoplasmic side of the membrane. The chain crosses the membrane as a helical span at residues 232 to 261 (FYMIPVFFAFRMRFYVAWIAAECGCIAAGF). Residues 262-426 (GAYPVAAKAR…LSLADTLRYW (165 aa)) are Lumenal-facing. The N-linked (GlcNAc...) asparagine glycan is linked to asparagine 321. Residues 427 to 447 (ASIYFCIHFLALAALGLGLAL) traverse the membrane as a helical segment. Over 448 to 472 (GGGSPSRRKAASQPTSLAPEKLREE) the chain is Cytoplasmic. The segment at 453–472 (SRRKAASQPTSLAPEKLREE) is disordered.

Belongs to the membrane-bound acyltransferase family. In terms of assembly, interacts with SPTSSA; the interaction facilitates MBOAT7 location to mitochondria-associated membranes (MAMs). Overexpressed in metastatic breast and bladder carcinomas relative to normal breast epithelium and urothelium.

It localises to the endoplasmic reticulum membrane. It catalyses the reaction a 1-acyl-sn-glycero-3-phospho-(1D-myo-inositol) + (5Z,8Z,11Z,14Z)-eicosatetraenoyl-CoA = a 1-acyl-2-(5Z,8Z,11Z,14Z-eicosatetraenoyl)-sn-glycero-3-phospho-(1D-myo-inositol) + CoA. The enzyme catalyses (5Z,8Z,11Z,14Z)-eicosatetraenoyl-CoA + 1-hexadecanoyl-sn-glycero-3-phosphocholine = 1-hexadecanoyl-2-(5Z,8Z,11Z,14Z-eicosatetraenoyl)-sn-glycero-3-phosphocholine + CoA. It carries out the reaction a 1-acyl-sn-glycero-3-phospho-(1D-myo-inositol) + an acyl-CoA = a 1,2-diacyl-sn-glycero-3-phospho-(1D-myo-inositol) + CoA. The catalysed reaction is 1-octadecanoyl-sn-glycero-3-phospho-(1D-myo-inositol) + (5Z,8Z,11Z,14Z)-eicosatetraenoyl-CoA = 1-octadecanoyl-2-(5Z,8Z,11Z,14Z-eicosatetraenoyl)-sn-glycero-3-phospho-(1D-myo-inositol) + CoA. The protein operates within lipid metabolism; phospholipid metabolism. With respect to regulation, activity is inhibited by thimerosal. Its function is as follows. Acyltransferase which catalyzes the transfer of an acyl group from an acyl-CoA to a lysophosphatidylinositol (1-acylglycerophosphatidylinositol or LPI) leading to the production of a phosphatidylinositol (1,2-diacyl-sn-glycero-3-phosphoinositol or PI) and participates in the reacylation step of the phospholipid remodeling pathway also known as the Lands cycle. Prefers arachidonoyl-CoA as the acyl donor, thus contributing to the regulation of free levels arachidonic acid in cell. In liver, participates in the regulation of triglyceride metabolism through the phosphatidylinositol acyl-chain remodeling regulation. The polypeptide is Membrane-bound acylglycerophosphatidylinositol O-acyltransferase MBOAT7 (Homo sapiens (Human)).